The sequence spans 252 residues: Chitooligosaccharide deacetylase (252 aa).

2 residues coordinate Mg(2+): His61 and His125.

This sequence belongs to the YdjC deacetylase family. ChbG subfamily. As to quaternary structure, homodimer. Mg(2+) is required as a cofactor.

It localises to the cytoplasm. It carries out the reaction N,N'-diacetylchitobiose + H2O = N-acetyl-beta-D-glucosaminyl-(1-&gt;4)-D-glucosamine + acetate. It catalyses the reaction diacetylchitobiose-6'-phosphate + H2O = N'-monoacetylchitobiose-6'-phosphate + acetate. It functions in the pathway glycan degradation; chitin degradation. Functionally, involved in the degradation of chitin. ChbG is essential for growth on the acetylated chitooligosaccharides chitobiose and chitotriose but is dispensable for growth on cellobiose and chitosan dimer, the deacetylated form of chitobiose. Deacetylation of chitobiose-6-P and chitotriose-6-P is necessary for both the activation of the chb promoter by the regulatory protein ChbR and the hydrolysis of phosphorylated beta-glucosides by the phospho-beta-glucosidase ChbF. Catalyzes the removal of only one acetyl group from chitobiose-6-P to yield monoacetylchitobiose-6-P, the inducer of ChbR and the substrate of ChbF. The polypeptide is Chitooligosaccharide deacetylase (Escherichia coli O6:K15:H31 (strain 536 / UPEC)).